The chain runs to 293 residues: Acetylglutamate kinase (293 aa).

Substrate contacts are provided by residues 71–72, Arg-93, and Asn-186; that span reads GG.

Belongs to the acetylglutamate kinase family. ArgB subfamily.

The protein localises to the cytoplasm. It carries out the reaction N-acetyl-L-glutamate + ATP = N-acetyl-L-glutamyl 5-phosphate + ADP. Its pathway is amino-acid biosynthesis; L-arginine biosynthesis; N(2)-acetyl-L-ornithine from L-glutamate: step 2/4. Its function is as follows. Catalyzes the ATP-dependent phosphorylation of N-acetyl-L-glutamate. The protein is Acetylglutamate kinase of Synechococcus sp. (strain WH7803).